The following is a 92-amino-acid chain: Small ribosomal subunit protein uS19 (92 aa).

It belongs to the universal ribosomal protein uS19 family.

Protein S19 forms a complex with S13 that binds strongly to the 16S ribosomal RNA. This chain is Small ribosomal subunit protein uS19, found in Nostoc punctiforme (strain ATCC 29133 / PCC 73102).